Consider the following 749-residue polypeptide: NAD(P)H-quinone oxidoreductase subunit 5, chloroplastic (749 aa).

The next 17 membrane-spanning stretches (helical) occupy residues 9-29 (WIIP…LLLF), 40-60 (WAFQ…NLSI), 89-109 (IDPL…MVLI), 125-145 (FAYM…SNLI), 147-167 (IYIF…FWFT), 185-205 (GDFG…SFEF), 219-239 (NEVN…GAVA), 258-278 (TPIS…FLVA), 290-312 (IMNF…ALAQ), 327-347 (LGYM…FHLI), 354-374 (ALLF…VGYC), 396-416 (TSFL…CFWS), 425-445 (WLYS…TAFY), 549-569 (LFPI…GIPF), 608-628 (VFSV…YKPV), 694-714 (IIDG…EVIK), and 725-745 (LFFY…LNVF).

Belongs to the complex I subunit 5 family. As to quaternary structure, NDH is composed of at least 16 different subunits, 5 of which are encoded in the nucleus.

Its subcellular location is the plastid. It localises to the chloroplast thylakoid membrane. It catalyses the reaction a plastoquinone + NADH + (n+1) H(+)(in) = a plastoquinol + NAD(+) + n H(+)(out). The catalysed reaction is a plastoquinone + NADPH + (n+1) H(+)(in) = a plastoquinol + NADP(+) + n H(+)(out). Its function is as follows. NDH shuttles electrons from NAD(P)H:plastoquinone, via FMN and iron-sulfur (Fe-S) centers, to quinones in the photosynthetic chain and possibly in a chloroplast respiratory chain. The immediate electron acceptor for the enzyme in this species is believed to be plastoquinone. Couples the redox reaction to proton translocation, and thus conserves the redox energy in a proton gradient. The protein is NAD(P)H-quinone oxidoreductase subunit 5, chloroplastic (ndhF) of Atractylodes lancea (Atractylodes japonica).